We begin with the raw amino-acid sequence, 200 residues long: Nucleoside triphosphate pyrophosphatase (200 aa).

The active-site Proton acceptor is the Asp-79.

It belongs to the Maf family. Requires a divalent metal cation as cofactor.

The protein localises to the cytoplasm. The enzyme catalyses a ribonucleoside 5'-triphosphate + H2O = a ribonucleoside 5'-phosphate + diphosphate + H(+). It carries out the reaction a 2'-deoxyribonucleoside 5'-triphosphate + H2O = a 2'-deoxyribonucleoside 5'-phosphate + diphosphate + H(+). Nucleoside triphosphate pyrophosphatase. May have a dual role in cell division arrest and in preventing the incorporation of modified nucleotides into cellular nucleic acids. The protein is Nucleoside triphosphate pyrophosphatase of Legionella pneumophila subsp. pneumophila (strain Philadelphia 1 / ATCC 33152 / DSM 7513).